We begin with the raw amino-acid sequence, 187 residues long: uncharacterized protein (187 aa).

The first 17 residues, 1 to 17 (MYAGGRVVRSAFARGKV), serve as a signal peptide directing secretion. Cysteine 18 carries N-palmitoyl cysteine lipidation. The S-diacylglycerol cysteine moiety is linked to residue cysteine 18.

The protein resides in the cell membrane. This is an uncharacterized protein from Treponema pallidum (strain Nichols).